Here is a 461-residue protein sequence, read N- to C-terminus: Protein naked cuticle homolog 2 (461 aa).

The interval 1 to 106 (MGKFQSKHAA…DGEKAASREG (106 aa)) is disordered. Residue glycine 2 is the site of N-myristoyl glycine attachment. 2 stretches are compositionally biased toward basic and acidic residues: residues 34-73 (RGAE…DKGS) and 97-106 (DGEKAASREG). Residues 121-186 (QCDVSVEEDN…LRVKLTVSPE (66 aa)) form an interaction with DVL1, DVL2 and DVL3 region. Residues 127–162 (EEDNRQEWTFTLYDFDNSGKVTREDMSSLMHTIYEV) enclose the EF-hand domain. Positions 140, 142, 144, 146, and 151 each coordinate Ca(2+). 5 disordered regions span residues 176-205 (TLRV…PTRG), 263-302 (YTSK…HAIH), 321-359 (TRAL…PGKA), 372-414 (SAQD…GQPT), and 441-461 (HEHH…FHPS). Over residues 188 to 205 (SSKKECPLTGQDREPTRG) the composition is skewed to basic and acidic residues. Positions 307 to 396 (QVLAEHVIPA…PPQPYGHKRY (90 aa)) are interaction with TGFA. A compositionally biased stretch (low complexity) spans 341-350 (PKGPGKPLGT). Residues 380 to 390 (PQPPPQPPPQP) show a composition bias toward pro residues.

The protein belongs to the NKD family. As to quaternary structure, interacts with RNF25, TGFA (via cytoplasmic domain), and PPP2R3A. Interacts with DVL1, DVL2 and DVL3. Post-translationally, ubiquitinated, leading to rapid proteasomal degradation. Interaction with TGFA interferes with RNF25 binding and protects against ubiquitination mediated by RNF25. As to expression, expressed in the cecum, colon, esophagus, ileum, jejunum, skin and stomach.

The protein localises to the cell membrane. The protein resides in the cytoplasm. It is found in the cytoplasmic vesicle. Functionally, cell autonomous antagonist of the canonical Wnt signaling pathway. May activate a second Wnt signaling pathway that controls planar cell polarity. Required for processing of TGFA and for targeting of TGFA to the basolateral membrane of polarized epithelial cells. The polypeptide is Protein naked cuticle homolog 2 (Nkd2) (Mus musculus (Mouse)).